The sequence spans 482 residues: Argininosuccinate synthase (482 aa).

Residues 17-25 and Ala-43 each bind ATP; that span reads AFSGGLDTS. An L-citrulline-binding site is contributed by Tyr-99. Gly-129 and Thr-131 together coordinate ATP. Thr-131, Asn-135, and Asp-136 together coordinate L-aspartate. Asn-135 is an L-citrulline binding site. Asp-136 serves as a coordination point for ATP. Residues Arg-139 and Ser-192 each contribute to the L-citrulline site. Asp-194 lines the ATP pocket. L-citrulline contacts are provided by Thr-201, Glu-203, and Glu-280. Residues 461–482 are disordered; that stretch reads SRGEATDEETMLDRAAMESGTD.

The protein belongs to the argininosuccinate synthase family. Type 2 subfamily. As to quaternary structure, homotetramer.

It localises to the cytoplasm. It catalyses the reaction L-citrulline + L-aspartate + ATP = 2-(N(omega)-L-arginino)succinate + AMP + diphosphate + H(+). Its pathway is amino-acid biosynthesis; L-arginine biosynthesis; L-arginine from L-ornithine and carbamoyl phosphate: step 2/3. This is Argininosuccinate synthase (argG) from Streptomyces lavendulae.